The following is a 270-amino-acid chain: 4-hydroxy-tetrahydrodipicolinate reductase (270 aa).

NAD(+)-binding positions include 9-14 (GAGGRM) and Glu-35. Arg-36 is an NADP(+) binding site. NAD(+) contacts are provided by residues 99–101 (GTT) and 123–126 (ASNF). The Proton donor/acceptor role is filled by His-156. Residue His-157 participates in (S)-2,3,4,5-tetrahydrodipicolinate binding. Residue Lys-160 is the Proton donor of the active site. 166-167 (GT) is a (S)-2,3,4,5-tetrahydrodipicolinate binding site.

Belongs to the DapB family.

It is found in the cytoplasm. It carries out the reaction (S)-2,3,4,5-tetrahydrodipicolinate + NAD(+) + H2O = (2S,4S)-4-hydroxy-2,3,4,5-tetrahydrodipicolinate + NADH + H(+). It catalyses the reaction (S)-2,3,4,5-tetrahydrodipicolinate + NADP(+) + H2O = (2S,4S)-4-hydroxy-2,3,4,5-tetrahydrodipicolinate + NADPH + H(+). The protein operates within amino-acid biosynthesis; L-lysine biosynthesis via DAP pathway; (S)-tetrahydrodipicolinate from L-aspartate: step 4/4. Functionally, catalyzes the conversion of 4-hydroxy-tetrahydrodipicolinate (HTPA) to tetrahydrodipicolinate. The chain is 4-hydroxy-tetrahydrodipicolinate reductase from Haemophilus influenzae (strain PittEE).